Here is a 130-residue protein sequence, read N- to C-terminus: Protein ApaG (130 aa).

The 125-residue stretch at 3–127 (RATTRKIQVT…FSLDVPHMAR (125 aa)) folds into the ApaG domain.

The protein is Protein ApaG of Azorhizobium caulinodans (strain ATCC 43989 / DSM 5975 / JCM 20966 / LMG 6465 / NBRC 14845 / NCIMB 13405 / ORS 571).